The primary structure comprises 335 residues: Beta-ketoacyl-[acyl-carrier-protein] synthase III (335 aa).

Residues cysteine 119 and histidine 261 contribute to the active site. The tract at residues 262–266 (QANQR) is ACP-binding. Residue asparagine 291 is part of the active site.

It belongs to the thiolase-like superfamily. FabH family. Homodimer.

It localises to the cytoplasm. It carries out the reaction malonyl-[ACP] + acetyl-CoA + H(+) = 3-oxobutanoyl-[ACP] + CO2 + CoA. It functions in the pathway lipid metabolism; fatty acid biosynthesis. In terms of biological role, catalyzes the condensation reaction of fatty acid synthesis by the addition to an acyl acceptor of two carbons from malonyl-ACP. Catalyzes the first condensation reaction which initiates fatty acid synthesis and may therefore play a role in governing the total rate of fatty acid production. Possesses both acetoacetyl-ACP synthase and acetyl transacylase activities. Its substrate specificity determines the biosynthesis of branched-chain and/or straight-chain of fatty acids. The protein is Beta-ketoacyl-[acyl-carrier-protein] synthase III of Prochlorococcus marinus subsp. pastoris (strain CCMP1986 / NIES-2087 / MED4).